The chain runs to 104 residues: Large ribosomal subunit protein uL24 (104 aa).

The protein belongs to the universal ribosomal protein uL24 family. As to quaternary structure, part of the 50S ribosomal subunit.

Functionally, one of two assembly initiator proteins, it binds directly to the 5'-end of the 23S rRNA, where it nucleates assembly of the 50S subunit. In terms of biological role, one of the proteins that surrounds the polypeptide exit tunnel on the outside of the subunit. This Pseudomonas savastanoi pv. phaseolicola (strain 1448A / Race 6) (Pseudomonas syringae pv. phaseolicola (strain 1448A / Race 6)) protein is Large ribosomal subunit protein uL24.